The following is a 153-amino-acid chain: Putative pre-16S rRNA nuclease (153 aa).

The protein belongs to the YqgF nuclease family.

The protein localises to the cytoplasm. Functionally, could be a nuclease involved in processing of the 5'-end of pre-16S rRNA. The chain is Putative pre-16S rRNA nuclease from Prochlorococcus marinus (strain MIT 9215).